A 425-amino-acid chain; its full sequence is Dihydroorotase (425 aa).

H61 and H63 together coordinate Zn(2+). Substrate is bound by residues H63 to R65 and N95. Residues D153, H180, and H233 each coordinate Zn(2+). N279 serves as a coordination point for substrate. Zn(2+) is bound at residue D306. D306 is a catalytic residue. H310 contributes to the substrate binding site.

Belongs to the metallo-dependent hydrolases superfamily. DHOase family. Class I DHOase subfamily. Requires Zn(2+) as cofactor.

The enzyme catalyses (S)-dihydroorotate + H2O = N-carbamoyl-L-aspartate + H(+). Its pathway is pyrimidine metabolism; UMP biosynthesis via de novo pathway; (S)-dihydroorotate from bicarbonate: step 3/3. Catalyzes the reversible cyclization of carbamoyl aspartate to dihydroorotate. This is Dihydroorotase from Geotalea daltonii (strain DSM 22248 / JCM 15807 / FRC-32) (Geobacter daltonii).